Consider the following 158-residue polypeptide: Superoxide dismutase [Cu-Zn] (158 aa).

Cu cation contacts are provided by histidine 46, histidine 48, and histidine 63. Cysteine 57 and cysteine 149 are joined by a disulfide. The Zn(2+) site is built by histidine 63, histidine 71, histidine 80, and aspartate 83. Histidine 120 contacts Cu cation.

Belongs to the Cu-Zn superoxide dismutase family. Homodimer. The cofactor is Cu cation. Zn(2+) is required as a cofactor.

Its subcellular location is the cytoplasm. The catalysed reaction is 2 superoxide + 2 H(+) = H2O2 + O2. Destroys radicals which are normally produced within the cells and which are toxic to biological systems. The sequence is that of Superoxide dismutase [Cu-Zn] (sod-1) from Onchocerca volvulus.